The following is a 347-amino-acid chain: Protein RecA (347 aa).

ATP is bound at residue 67–74 (GPESSGKT).

This sequence belongs to the RecA family. Post-translationally, the protein migrates as a 40 kDa protein in strains 69A and NCTC 11637. When overexpressed in E.coli a 38 kDa protein is made which is unable to complement the E.coli deletion mutant. It has been suggested this size difference is due to a post-translational modification.

Its subcellular location is the cytoplasm. In terms of biological role, can catalyze the hydrolysis of ATP in the presence of single-stranded DNA, the ATP-dependent uptake of single-stranded DNA by duplex DNA, and the ATP-dependent hybridization of homologous single-stranded DNAs. It interacts with LexA causing its activation and leading to its autocatalytic cleavage. Its function is as follows. Deletion of this gene leads to the inability of the bacteria to perform homologous recombination, and markedly increases UV sensitivity. The protein is Protein RecA of Helicobacter pylori (strain ATCC 700392 / 26695) (Campylobacter pylori).